Reading from the N-terminus, the 74-residue chain is Anaphase-promoting complex subunit 13 (74 aa).

The tract at residues 33–56 is disordered; that stretch reads LSELPEPEQDNGGTTESVKEQEMK.

The protein belongs to the APC13 family. In terms of assembly, the mammalian APC/C is composed at least of 14 distinct subunits ANAPC1, ANAPC2, CDC27/APC3, ANAPC4, ANAPC5, CDC16/APC6, ANAPC7, CDC23/APC8, ANAPC10, ANAPC11, CDC26/APC12, ANAPC13, ANAPC15 and ANAPC16 that assemble into a complex of at least 19 chains with a combined molecular mass of around 1.2 MDa; APC/C interacts with FZR1 and FBXO5.

It is found in the nucleus. Its pathway is protein modification; protein ubiquitination. Its function is as follows. Component of the anaphase promoting complex/cyclosome (APC/C), a cell cycle-regulated E3 ubiquitin ligase that controls progression through mitosis and the G1 phase of the cell cycle. The APC/C complex acts by mediating ubiquitination and subsequent degradation of target proteins: it mainly mediates the formation of 'Lys-11'-linked polyubiquitin chains and, to a lower extent, the formation of 'Lys-48'- and 'Lys-63'-linked polyubiquitin chains. The APC/C complex catalyzes assembly of branched 'Lys-11'-/'Lys-48'-linked branched ubiquitin chains on target proteins. The sequence is that of Anaphase-promoting complex subunit 13 (Anapc13) from Mus musculus (Mouse).